Consider the following 375-residue polypeptide: 23S rRNA (uracil(747)-C(5))-methyltransferase RlmC (375 aa).

Residues C3, C11, C14, and C87 each contribute to the [4Fe-4S] cluster site. S-adenosyl-L-methionine is bound by residues Q212, F241, E262, and N307. The Nucleophile role is filled by C334.

It belongs to the class I-like SAM-binding methyltransferase superfamily. RNA M5U methyltransferase family. RlmC subfamily.

It carries out the reaction uridine(747) in 23S rRNA + S-adenosyl-L-methionine = 5-methyluridine(747) in 23S rRNA + S-adenosyl-L-homocysteine + H(+). Functionally, catalyzes the formation of 5-methyl-uridine at position 747 (m5U747) in 23S rRNA. The sequence is that of 23S rRNA (uracil(747)-C(5))-methyltransferase RlmC from Shigella flexneri serotype 5b (strain 8401).